A 171-amino-acid chain; its full sequence is ATP synthase subunit b (171 aa).

Residues Phe-32–Pro-52 form a helical membrane-spanning segment.

The protein belongs to the ATPase B chain family. F-type ATPases have 2 components, F(1) - the catalytic core - and F(0) - the membrane proton channel. F(1) has five subunits: alpha(3), beta(3), gamma(1), delta(1), epsilon(1). F(0) has three main subunits: a(1), b(2) and c(10-14). The alpha and beta chains form an alternating ring which encloses part of the gamma chain. F(1) is attached to F(0) by a central stalk formed by the gamma and epsilon chains, while a peripheral stalk is formed by the delta and b chains.

It is found in the cell membrane. F(1)F(0) ATP synthase produces ATP from ADP in the presence of a proton or sodium gradient. F-type ATPases consist of two structural domains, F(1) containing the extramembraneous catalytic core and F(0) containing the membrane proton channel, linked together by a central stalk and a peripheral stalk. During catalysis, ATP synthesis in the catalytic domain of F(1) is coupled via a rotary mechanism of the central stalk subunits to proton translocation. In terms of biological role, component of the F(0) channel, it forms part of the peripheral stalk, linking F(1) to F(0). The polypeptide is ATP synthase subunit b (Mycolicibacterium gilvum (strain PYR-GCK) (Mycobacterium gilvum (strain PYR-GCK))).